The chain runs to 123 residues: Small ribosomal subunit protein uS13 (123 aa).

Residues 93–123 (HRKGLPVRGQNTKNNARTRKGPAKAIAGKKK) are disordered. Basic residues predominate over residues 108–123 (ARTRKGPAKAIAGKKK).

Belongs to the universal ribosomal protein uS13 family. As to quaternary structure, part of the 30S ribosomal subunit. Forms a loose heterodimer with protein S19. Forms two bridges to the 50S subunit in the 70S ribosome.

Located at the top of the head of the 30S subunit, it contacts several helices of the 16S rRNA. In the 70S ribosome it contacts the 23S rRNA (bridge B1a) and protein L5 of the 50S subunit (bridge B1b), connecting the 2 subunits; these bridges are implicated in subunit movement. Contacts the tRNAs in the A and P-sites. The polypeptide is Small ribosomal subunit protein uS13 (Leuconostoc mesenteroides subsp. mesenteroides (strain ATCC 8293 / DSM 20343 / BCRC 11652 / CCM 1803 / JCM 6124 / NCDO 523 / NBRC 100496 / NCIMB 8023 / NCTC 12954 / NRRL B-1118 / 37Y)).